The primary structure comprises 313 residues: Homoserine O-acetyltransferase (313 aa).

The active-site Acyl-thioester intermediate is cysteine 142. Substrate contacts are provided by lysine 163 and serine 191. Histidine 234 acts as the Proton acceptor in catalysis. The active site involves glutamate 236. Residue arginine 248 coordinates substrate.

Belongs to the MetA family.

Its subcellular location is the cytoplasm. The catalysed reaction is L-homoserine + acetyl-CoA = O-acetyl-L-homoserine + CoA. It functions in the pathway amino-acid biosynthesis; L-methionine biosynthesis via de novo pathway; O-acetyl-L-homoserine from L-homoserine: step 1/1. Transfers an acetyl group from acetyl-CoA to L-homoserine, forming acetyl-L-homoserine. The chain is Homoserine O-acetyltransferase from Streptococcus gordonii (strain Challis / ATCC 35105 / BCRC 15272 / CH1 / DL1 / V288).